The chain runs to 651 residues: Aspartate--tRNA ligase, mitochondrial (651 aa).

The transit peptide at 1–44 directs the protein to the mitochondrion; it reads MFCWLSRLCGELSTPTRRTTQLIWSSAARSMVLSSQRIPELSSF. Thr-216 carries the phosphothreonine modification. At Ser-239 the chain carries Phosphoserine. The segment at 241 to 244 is aspartate; it reads QQFK. L-aspartate is bound at residue Arg-263. An ATP-binding site is contributed by 263 to 265; that stretch reads RDE. N6-acetyllysine is present on Lys-379. Glu-532 serves as a coordination point for ATP. Arg-539 is an L-aspartate binding site. 581 to 584 is an ATP binding site; that stretch reads GLDR.

Belongs to the class-II aminoacyl-tRNA synthetase family. Type 1 subfamily. As to quaternary structure, homodimer.

It is found in the mitochondrion matrix. It localises to the mitochondrion membrane. It catalyses the reaction tRNA(Asp) + L-aspartate + ATP = L-aspartyl-tRNA(Asp) + AMP + diphosphate. Its function is as follows. Catalyzes the attachment of aspartate to tRNA(Asp) in a two-step reaction: aspartate is first activated by ATP to form Asp-AMP and then transferred to the acceptor end of tRNA(Asp). The chain is Aspartate--tRNA ligase, mitochondrial (DARS2) from Bos taurus (Bovine).